The following is a 62-amino-acid chain: Protein DsrB (62 aa).

The protein belongs to the DsrB family.

The sequence is that of Protein DsrB from Enterobacter sp. (strain 638).